The following is a 70-amino-acid chain: Large ribosomal subunit protein bL31c (70 aa).

This sequence belongs to the bacterial ribosomal protein bL31 family. Type A subfamily. As to quaternary structure, part of the 50S ribosomal subunit.

It is found in the plastid. Its subcellular location is the chloroplast. In terms of biological role, binds the 23S rRNA. In Emiliania huxleyi (Coccolithophore), this protein is Large ribosomal subunit protein bL31c.